The following is a 436-amino-acid chain: Protein VHS2 (436 aa).

The interval 1–34 (MDTSNHNQDHDSHVAAQRENDNNYMPPSPSMSES) is disordered. Positions 7–21 (NQDHDSHVAAQREND) are enriched in basic and acidic residues. Residues serine 53, serine 61, serine 102, and serine 172 each carry the phosphoserine modification. 4 disordered regions span residues 165-195 (RALG…DHGS), 211-266 (NNNN…HMNF), 282-360 (NNAN…EEDN), and 389-436 (NDNH…DTTK). A compositionally biased stretch (polar residues) spans 171–183 (RSLSSQSFDNETS). Low complexity-rich tracts occupy residues 211-226 (NNNN…STAN), 238-261 (SFSS…ASPP), and 282-299 (NNAN…AALS). Phosphoserine is present on residues serine 299, serine 301, serine 303, and serine 325. Polar residues predominate over residues 300-312 (RSPSNQQYLLKQQ). Residues 401–436 (TINNNIKNSPAFTNSNPSSKSNSNSTITSMNPDTTK) show a composition bias toward low complexity.

This sequence to yeast MFL3.

The protein resides in the cytoplasm. Functionally, can suppress the synthetic lethality of the hal3 sit4 double mutation when overexpressed, suggesting that it is involved in the G1-S transition. The polypeptide is Protein VHS2 (VHS2) (Saccharomyces cerevisiae (strain ATCC 204508 / S288c) (Baker's yeast)).